A 197-amino-acid polypeptide reads, in one-letter code: Holliday junction branch migration complex subunit RuvA (197 aa).

The segment at 1-64 (MYEYIKGKYI…EDFIGVYGFL (64 aa)) is domain I. Residues 65–144 (TKDELSMFKL…DILEEDDEQI (80 aa)) form a domain II region. Positions 145–149 (INKVA) are flexible linker. Residues 149-197 (ADDKKVLEAVAALVTLGYSEKEANKVINSCDKNNSLEQIIKEALKYLMK) are domain III.

Belongs to the RuvA family. As to quaternary structure, homotetramer. Forms an RuvA(8)-RuvB(12)-Holliday junction (HJ) complex. HJ DNA is sandwiched between 2 RuvA tetramers; dsDNA enters through RuvA and exits via RuvB. An RuvB hexamer assembles on each DNA strand where it exits the tetramer. Each RuvB hexamer is contacted by two RuvA subunits (via domain III) on 2 adjacent RuvB subunits; this complex drives branch migration. In the full resolvosome a probable DNA-RuvA(4)-RuvB(12)-RuvC(2) complex forms which resolves the HJ.

The protein localises to the cytoplasm. Its function is as follows. The RuvA-RuvB-RuvC complex processes Holliday junction (HJ) DNA during genetic recombination and DNA repair, while the RuvA-RuvB complex plays an important role in the rescue of blocked DNA replication forks via replication fork reversal (RFR). RuvA specifically binds to HJ cruciform DNA, conferring on it an open structure. The RuvB hexamer acts as an ATP-dependent pump, pulling dsDNA into and through the RuvAB complex. HJ branch migration allows RuvC to scan DNA until it finds its consensus sequence, where it cleaves and resolves the cruciform DNA. This chain is Holliday junction branch migration complex subunit RuvA, found in Clostridium botulinum (strain ATCC 19397 / Type A).